Here is a 253-residue protein sequence, read N- to C-terminus: MICOS complex subunit mic25 (253 aa).

Residues 1–89 (MGGSESTGRK…GAHKPTAAGV (89 aa)) form a disordered region. G2 is lipidated: N-myristoyl glycine. Over residues 28 to 44 (RLSDEVVNRMKDSDLPS) the composition is skewed to basic and acidic residues. Positions 48–64 (STSAASGTASAPAAFPS) are enriched in low complexity. Positions 94 to 178 (AEEDLYRRYE…EQLSSIEKKN (85 aa)) form a coiled coil. The CHCH domain maps to 206–248 (DPVCMNLQADILKCYSENKQERLNCSNLAKEYRKCVSAAQKNL). Short sequence motifs (cx9C motif) lie at residues 209 to 219 (CMNLQADILKC) and 230 to 240 (CSNLAKEYRKC). 2 disulfide bridges follow: C209–C240 and C219–C230.

Belongs to the MICOS complex subunit Mic19 family. Metazoan Mic25 subfamily. In terms of assembly, component of the mitochondrial contact site and cristae organizing system (MICOS) complex (also known as MINOS or MitOS complex).

Its subcellular location is the mitochondrion inner membrane. Its function is as follows. Component of the MICOS complex, a large protein complex of the mitochondrial inner membrane that plays crucial roles in the maintenance of crista junctions, inner membrane architecture, and formation of contact sites to the outer membrane. The protein is MICOS complex subunit mic25 (chchd6) of Xenopus tropicalis (Western clawed frog).